A 485-amino-acid polypeptide reads, in one-letter code: ATP synthase subunit beta (485 aa).

The span at 1 to 11 (MPATETADKNT) shows a compositional bias: basic and acidic residues. A disordered region spans residues 1-20 (MPATETADKNTKSANSDTSG). 170-177 (GGAGVGKT) provides a ligand contact to ATP.

Belongs to the ATPase alpha/beta chains family. As to quaternary structure, F-type ATPases have 2 components, CF(1) - the catalytic core - and CF(0) - the membrane proton channel. CF(1) has five subunits: alpha(3), beta(3), gamma(1), delta(1), epsilon(1). CF(0) has three main subunits: a(1), b(2) and c(9-12). The alpha and beta chains form an alternating ring which encloses part of the gamma chain. CF(1) is attached to CF(0) by a central stalk formed by the gamma and epsilon chains, while a peripheral stalk is formed by the delta and b chains.

It is found in the cell membrane. It carries out the reaction ATP + H2O + 4 H(+)(in) = ADP + phosphate + 5 H(+)(out). In terms of biological role, produces ATP from ADP in the presence of a proton gradient across the membrane. The catalytic sites are hosted primarily by the beta subunits. The sequence is that of ATP synthase subunit beta from Mycolicibacterium paratuberculosis (strain ATCC BAA-968 / K-10) (Mycobacterium paratuberculosis).